A 348-amino-acid polypeptide reads, in one-letter code: D-alanine--D-alanine ligase (348 aa).

In terms of domain architecture, ATP-grasp spans 132 to 334 (KQVLATVGVP…YSDLIEKLVM (203 aa)). 162 to 217 (LETLSFPIFVKPANMGSSVGISKATDESSLRSAIDLALKYDSRILIEQGVTAREIE) contacts ATP. Residues D288, E301, and N303 each contribute to the Mg(2+) site.

Belongs to the D-alanine--D-alanine ligase family. Mg(2+) serves as cofactor. Requires Mn(2+) as cofactor.

The protein localises to the cytoplasm. It carries out the reaction 2 D-alanine + ATP = D-alanyl-D-alanine + ADP + phosphate + H(+). The protein operates within cell wall biogenesis; peptidoglycan biosynthesis. Its function is as follows. Cell wall formation. The sequence is that of D-alanine--D-alanine ligase from Streptococcus agalactiae serotype Ia (strain ATCC 27591 / A909 / CDC SS700).